A 281-amino-acid polypeptide reads, in one-letter code: Large ribosomal subunit protein uL2 (281 aa).

2 disordered regions span residues 1 to 23 (MAVKHYKPVTNGRRNMSSLDYSK) and 224 to 281 (RGSV…KDSK). Polar residues predominate over residues 12 to 23 (GRRNMSSLDYSK). The span at 261-281 (KTRKTKKSSTKLILRRRKDSK) shows a compositional bias: basic residues.

Belongs to the universal ribosomal protein uL2 family. Part of the 50S ribosomal subunit. Forms a bridge to the 30S subunit in the 70S ribosome.

Its function is as follows. One of the primary rRNA binding proteins. Required for association of the 30S and 50S subunits to form the 70S ribosome, for tRNA binding and peptide bond formation. It has been suggested to have peptidyltransferase activity; this is somewhat controversial. Makes several contacts with the 16S rRNA in the 70S ribosome. The protein is Large ribosomal subunit protein uL2 of Mycoplasmopsis agalactiae (strain NCTC 10123 / CIP 59.7 / PG2) (Mycoplasma agalactiae).